The following is a 200-amino-acid chain: Probable GTP-binding protein EngB (200 aa).

The 175-residue stretch at 24 to 198 folds into the EngB-type G domain; it reads EGMEVAFAGR…QAQLDEWLGI (175 aa). Residues 32–39, 59–63, 77–80, 144–147, and 177–179 contribute to the GTP site; these read GRSNVGKS, GRTQM, DLPG, TKSD, and FSA. Residues Ser-39 and Thr-61 each coordinate Mg(2+).

Belongs to the TRAFAC class TrmE-Era-EngA-EngB-Septin-like GTPase superfamily. EngB GTPase family. Requires Mg(2+) as cofactor.

In terms of biological role, necessary for normal cell division and for the maintenance of normal septation. The protein is Probable GTP-binding protein EngB of Nitrosococcus oceani (strain ATCC 19707 / BCRC 17464 / JCM 30415 / NCIMB 11848 / C-107).